The primary structure comprises 80 residues: Histone H1.M6.1 (80 aa).

Positions 1 to 80 (MSDAAVPPKK…KAVKKAPKKK (80 aa)) are disordered. A compositionally biased stretch (basic residues) spans 11–80 (ASPKKAAAKK…KAVKKAPKKK (70 aa)).

The protein resides in the nucleus. The protein localises to the chromosome. The chain is Histone H1.M6.1 from Trypanosoma cruzi.